A 316-amino-acid polypeptide reads, in one-letter code: C1GALT1-specific chaperone 1 (316 aa).

Topologically, residues methionine 1–serine 6 are cytoplasmic. The chain crosses the membrane as a helical; Signal-anchor for type II membrane protein span at residues serine 7–glycine 26. Residues histidine 27–aspartate 316 are Lumenal-facing.

The protein belongs to the glycosyltransferase 31 family. Beta3-Gal-T subfamily. Associates with core 1 beta-3-galactosyltransferase (C1GALT1), probably not with the soluble active form.

It is found in the membrane. Probable chaperone required for the generation of 1 O-glycan Gal-beta1-3GalNAc-alpha1-Ser/Thr (T antigen), which is a precursor for many extended O-glycans in glycoproteins. Probably acts as a specific molecular chaperone assisting the folding/stability of core 1 beta-3-galactosyltransferase (C1GALT1). This Mus musculus (Mouse) protein is C1GALT1-specific chaperone 1 (C1galt1c1).